Here is a 389-residue protein sequence, read N- to C-terminus: Large envelope protein (389 aa).

Residue methionine 1 is modified to N-acetylmethionine. Glycine 2 carries the N-myristoyl glycine; by host lipid modification. Positions 2 to 108 (GTNLSVPNPL…PPLRDTHPQA (107 aa)) are pre-S1. The interval 2-163 (GTNLSVPNPL…LSKTGDPVPN (162 aa)) is pre-S. Topologically, residues 2-170 (GTNLSVPNPL…VPNMENIASG (169 aa)) are virion surface; in external conformation. Over 2–242 (GTNLSVPNPL…PGYRWMCLRR (241 aa)) the chain is Intravirion; in internal conformation. The interval 74 to 103 (LTTVPAAPPPASTNRQSGRQPTPLSPPLRD) is disordered. Positions 85–95 (STNRQSGRQPT) are enriched in polar residues. Residues 109–163 (MQWNSTTFHQTLQDPGVRALYFPAGGSSSGTVSPAQNTVSAISSILSKTGDPVPN) form a pre-S2 region. The chain crosses the membrane as a helical span at residues 171–191 (LLGPLLVLQAGFFLLTKILTI). Residues 192–242 (PQSLDSWWTSLNFLGGTPVCLGQNSQSQISSHSPTCCPPICPGYRWMCLRR) lie on the Intravirion; in external conformation side of the membrane. A helical transmembrane segment spans residues 243-263 (FIIFLCILLLCLIFLLVLLDY). The Virion surface portion of the chain corresponds to 264-337 (QGMLPVCPLI…WASVRFSWLS (74 aa)). An N-linked (GlcNAc...) asparagine; by host glycan is attached at asparagine 309. Residues 338–358 (LLVPFVQWFVGLSPTVWLSVI) form a helical membrane-spanning segment. Topologically, residues 359–364 (WMIWFW) are intravirion. Residues 365–387 (GPSLYNILSPFMPLLPIFFCLWV) form a helical membrane-spanning segment. Topologically, residues 388-389 (YI) are virion surface.

The protein belongs to the orthohepadnavirus major surface antigen family. Interacts (via its myristoylated pre-S1 region) with the host SLC10A1/NTCP; this interaction is essential for viral entry. In terms of assembly, in its internal form (Li-HBsAg), interacts with the capsid protein and with the isoform S. Interacts with host chaperone CANX. As to quaternary structure, associates with host chaperone CANX through its pre-S2 N glycan; this association may be essential for isoform M proper secretion. Interacts with isoform L. Interacts with the antigens of satellite virus HDV (HDVAgs); this interaction is required for encapsidation of HDV genomic RNA. Isoform M is N-terminally acetylated by host at a ratio of 90%, and N-glycosylated by host at the pre-S2 region. In terms of processing, myristoylated; this modification is essential for its interaction with the host protein SLC10A1/NTCP.

Its subcellular location is the virion membrane. The large envelope protein exists in two topological conformations, one which is termed 'external' or Le-HBsAg and the other 'internal' or Li-HBsAg. In its external conformation the protein attaches the virus to cell receptors and thereby initiating infection. This interaction determines the species specificity and liver tropism. This attachment induces virion internalization predominantly through caveolin-mediated endocytosis. The large envelope protein also assures fusion between virion membrane and endosomal membrane. In its internal conformation the protein plays a role in virion morphogenesis and mediates the contact with the nucleocapsid like a matrix protein. In terms of biological role, the middle envelope protein plays an important role in the budding of the virion. It is involved in the induction of budding in a nucleocapsid independent way. In this process the majority of envelope proteins bud to form subviral lipoprotein particles of 22 nm of diameter that do not contain a nucleocapsid. In Hepatitis B virus genotype B/C subtype adw (isolate Okinawa/pODW282/1998) (HBV-B), this protein is Large envelope protein.